Reading from the N-terminus, the 321-residue chain is Anthranilate phosphoribosyltransferase (321 aa).

Residues glycine 72, 75–76, threonine 80, 82–85, 99–107, and serine 111 each bind 5-phospho-alpha-D-ribose 1-diphosphate; these read GD, NVST, and KHGNVSITS. Glycine 72 is an anthranilate binding site. Serine 84 is a Mg(2+) binding site. Asparagine 102 contributes to the anthranilate binding site. An anthranilate-binding site is contributed by arginine 157. 2 residues coordinate Mg(2+): aspartate 216 and glutamate 217.

This sequence belongs to the anthranilate phosphoribosyltransferase family. Homodimer. The cofactor is Mg(2+).

The enzyme catalyses N-(5-phospho-beta-D-ribosyl)anthranilate + diphosphate = 5-phospho-alpha-D-ribose 1-diphosphate + anthranilate. It functions in the pathway amino-acid biosynthesis; L-tryptophan biosynthesis; L-tryptophan from chorismate: step 2/5. Its function is as follows. Catalyzes the transfer of the phosphoribosyl group of 5-phosphorylribose-1-pyrophosphate (PRPP) to anthranilate to yield N-(5'-phosphoribosyl)-anthranilate (PRA). This Methanococcus maripaludis (strain C6 / ATCC BAA-1332) protein is Anthranilate phosphoribosyltransferase.